The following is a 375-amino-acid chain: Superinfection exclusion protein (375 aa).

The first 15 residues, 1-15, serve as a signal peptide directing secretion; it reads MIALLILSLACSVSA.

The protein belongs to the serpin family. Orthopoxvirus OPG040 subfamily. As to quaternary structure, interacts with OPG185/A56 protein.

It localises to the virion membrane. The protein resides in the host cell membrane. Its function is as follows. Negatively regulates superinfection and syncytium formation in infected host cells. Acts in concert with OPG185/A56 protein at the host cell membrane by interacting with and inhibiting the mature virion entry/fusion complex (EFC). This mechanism ensures that new virions released from the cell cannot enter already infected cells. The chain is Superinfection exclusion protein (OPG040) from Cynomys gunnisoni (Gunnison's prairie dog).